Reading from the N-terminus, the 269-residue chain is F-box protein At5g52880 (269 aa).

In terms of domain architecture, F-box spans 109–155 (DIDIPSLPQDILIHIFSFLEISSLVSSAQVSRSWNQATHENSLWQSQ).

The sequence is that of F-box protein At5g52880 from Arabidopsis thaliana (Mouse-ear cress).